The chain runs to 371 residues: MAELQEVQITEEKPLLPGQTPEAAKEAELAARILLDQGQTHSVETPYGSVTFTVYGTPKPKRPAIFTYHDVGLNYKSCFQPLFQFGDMQEIIQNFVRVHVDAPGMEEGAPVFPLGYQYPSQDQLADMIPCILQYLNFSTIIGVGVGAGAYILSRYALNHPDTVEGLVLINIDPNAKGWMDWAAHKLTGLTSSIPEMILGHLFSQEELSGNSELIQKYRSLITHAPNLENIELYWNSYNNRRDLNFERGGEMTLKCPVMLVVGDQAPHEDAVVECNSKLDPTQTSFLKMADSGGQPQLTQPGKLTEAFKYFVQGMGYMASSCMTRLSRSRTASLTSAASIDGSRSRSRTLSQSSESGTLPSGPPGHTMEVSC.

The segment at 1–22 (MAELQEVQITEEKPLLPGQTPE) is disordered. An N-acetylalanine modification is found at Ala2. At Thr20 the chain carries Phosphothreonine. Phosphoserine is present on residues Ser326 and Ser328. A Phosphothreonine modification is found at Thr330. Ser332 carries the phosphoserine modification. Thr334 bears the Phosphothreonine mark. The segment at 334-371 (TSAASIDGSRSRSRTLSQSSESGTLPSGPPGHTMEVSC) is disordered. Phosphoserine is present on residues Ser335, Ser338, and Ser344. Thr348 carries the post-translational modification Phosphothreonine. A phosphoserine mark is found at Ser350, Ser352, Ser353, and Ser355. Thr357 carries the post-translational modification Phosphothreonine. Residue Ser370 is modified to Phosphoserine.

Belongs to the NDRG family. In terms of tissue distribution, broadly expressed, with highest levels in heart, liver, skeletal muscle and aorta.

It is found in the cytoplasm. It localises to the perinuclear region. The protein localises to the cell projection. The protein resides in the growth cone. Contributes to the regulation of the Wnt signaling pathway. Down-regulates CTNNB1-mediated transcriptional activation of target genes, such as CCND1, and may thereby act as tumor suppressor. May be involved in dendritic cell and neuron differentiation. The chain is Protein NDRG2 (Ndrg2) from Rattus norvegicus (Rat).